Here is a 383-residue protein sequence, read N- to C-terminus: Probable endopolygalacturonase C (383 aa).

The N-terminal stretch at 1-16 (MVRQLILISSLLAAVA) is a signal peptide. Positions 17 to 40 (VRAPADPAHPMVTEAPDVNLVEKR) are excised as a propeptide. Residues Cys-44 and Cys-62 are joined by a disulfide bond. PbH1 repeat units lie at residues 175 to 206 (STDL…DIGE) and 207 to 228 (STYI…AINS). The active-site Proton donor is the Asp-221. The cysteines at positions 223 and 239 are disulfide-linked. His-243 is a catalytic residue. PbH1 repeat units follow at residues 253–279 (RDDN…RIKT) and 287–309 (VSEV…VIEQ). A glycan (N-linked (GlcNAc...) asparagine) is linked at Asn-260. 2 cysteine pairs are disulfide-bonded: Cys-348–Cys-353 and Cys-372–Cys-381.

It belongs to the glycosyl hydrolase 28 family.

The protein localises to the secreted. The catalysed reaction is (1,4-alpha-D-galacturonosyl)n+m + H2O = (1,4-alpha-D-galacturonosyl)n + (1,4-alpha-D-galacturonosyl)m.. Its function is as follows. Involved in maceration and soft-rotting of plant tissue. Hydrolyzes the 1,4-alpha glycosidic bonds of de-esterified pectate in the smooth region of the plant cell wall. In Aspergillus niger, this protein is Probable endopolygalacturonase C (pgaC).